A 290-amino-acid polypeptide reads, in one-letter code: ATP synthase gamma chain (290 aa).

It belongs to the ATPase gamma chain family. In terms of assembly, F-type ATPases have 2 components, CF(1) - the catalytic core - and CF(0) - the membrane proton channel. CF(1) has five subunits: alpha(3), beta(3), gamma(1), delta(1), epsilon(1). CF(0) has three main subunits: a, b and c.

It is found in the cell inner membrane. Produces ATP from ADP in the presence of a proton gradient across the membrane. The gamma chain is believed to be important in regulating ATPase activity and the flow of protons through the CF(0) complex. The protein is ATP synthase gamma chain of Chelativorans sp. (strain BNC1).